Here is a 640-residue protein sequence, read N- to C-terminus: Arogenate dehydrogenase 1, chloroplastic (640 aa).

Residues 1–18 (MAETLITKPPLSLSFTSL) constitute a chloroplast transit peptide. Prephenate/arogenate dehydrogenase domains lie at 53-334 (LRIA…GEND) and 365-640 (LKIG…LLTS).

It belongs to the prephenate/arogenate dehydrogenase family. In terms of tissue distribution, expressed in roots, stems, leaves, flowers, siliques and seeds. More abundant in seeds.

It localises to the plastid. It is found in the chloroplast. It carries out the reaction L-arogenate + NADP(+) = L-tyrosine + CO2 + NADPH. The protein operates within amino-acid biosynthesis; L-tyrosine biosynthesis; L-tyrosine from L-arogenate (NADP(+) route): step 1/1. Its function is as follows. Involved in the biosynthesis of tyrosine. Has no prephenate dehydrogenase activity. The sequence is that of Arogenate dehydrogenase 1, chloroplastic (TYRAAT1) from Arabidopsis thaliana (Mouse-ear cress).